Consider the following 619-residue polypeptide: ATP-dependent RNA helicase dbp9 (619 aa).

The segment at 1 to 30 is disordered; sequence MKRKLDANDVPSTEVAEEKETKDADNTDFE. The span at 16–25 shows a compositional bias: basic and acidic residues; sequence AEEKETKDAD. The short motif at 27-55 is the Q motif element; sequence TDFESLNLDPRLRQALIREQFTKPTPVQS. A Helicase ATP-binding domain is found at 58 to 236; the sequence is IPLALEGKDI…GLFCRSPVIL (179 aa). 71–78 is an ATP binding site; sequence AKTGSGKT. Residues 184–187 carry the DEAD box motif; that stretch reads DEAD. The region spanning 247–484 is the Helicase C-terminal domain; it reads GISQFVVRCA…EVKPYHFEMK (238 aa). Disordered regions lie at residues 339–390 and 582–619; these read SRTS…GKAK and GDNRIRKAREKNRGKGKGRKPSGVRKVDPLKTFNRGRK. Over residues 345 to 362 the composition is skewed to basic and acidic residues; the sequence is KSKEATDGDDEAKDKMGS. A compositionally biased stretch (basic residues) spans 587–604; the sequence is RKAREKNRGKGKGRKPSG.

This sequence belongs to the DEAD box helicase family. DDX56/DBP9 subfamily.

The protein resides in the nucleus. It localises to the nucleolus. The enzyme catalyses ATP + H2O = ADP + phosphate + H(+). Functionally, ATP-binding RNA helicase involved in the biogenesis of 60S ribosomal subunits and is required for the normal formation of 25S and 5.8S rRNAs. The protein is ATP-dependent RNA helicase dbp9 (dbp9) of Neosartorya fischeri (strain ATCC 1020 / DSM 3700 / CBS 544.65 / FGSC A1164 / JCM 1740 / NRRL 181 / WB 181) (Aspergillus fischerianus).